The chain runs to 420 residues: UDP-N-acetylglucosamine 1-carboxyvinyltransferase (420 aa).

Phosphoenolpyruvate is bound at residue 22 to 23 (KN). R92 contributes to the UDP-N-acetyl-alpha-D-glucosamine binding site. C116 (proton donor) is an active-site residue. 2-(S-cysteinyl)pyruvic acid O-phosphothioketal is present on C116. Residues 121–125 (RPVDQ), D304, and I326 contribute to the UDP-N-acetyl-alpha-D-glucosamine site.

Belongs to the EPSP synthase family. MurA subfamily.

It is found in the cytoplasm. It carries out the reaction phosphoenolpyruvate + UDP-N-acetyl-alpha-D-glucosamine = UDP-N-acetyl-3-O-(1-carboxyvinyl)-alpha-D-glucosamine + phosphate. It functions in the pathway cell wall biogenesis; peptidoglycan biosynthesis. Functionally, cell wall formation. Adds enolpyruvyl to UDP-N-acetylglucosamine. The sequence is that of UDP-N-acetylglucosamine 1-carboxyvinyltransferase from Paraburkholderia xenovorans (strain LB400).